The following is a 259-amino-acid chain: 5'-nucleotidase SurE (259 aa).

Residues Asp8, Asp9, Ser40, and Asn92 each coordinate a divalent metal cation.

This sequence belongs to the SurE nucleotidase family. A divalent metal cation is required as a cofactor.

The protein localises to the cytoplasm. The catalysed reaction is a ribonucleoside 5'-phosphate + H2O = a ribonucleoside + phosphate. Nucleotidase that shows phosphatase activity on nucleoside 5'-monophosphates. In Xanthomonas euvesicatoria pv. vesicatoria (strain 85-10) (Xanthomonas campestris pv. vesicatoria), this protein is 5'-nucleotidase SurE.